A 245-amino-acid chain; its full sequence is Carbohydrate deacetylase 1 (245 aa).

Residues histidine 59 and histidine 125 each coordinate Mg(2+).

This sequence belongs to the YdjC deacetylase family. Homodimer. The cofactor is Mg(2+).

Functionally, probably catalyzes the deacetylation of acetylated carbohydrates an important step in the degradation of oligosaccharides. The protein is Carbohydrate deacetylase 1 of Listeria innocua serovar 6a (strain ATCC BAA-680 / CLIP 11262).